A 50-amino-acid polypeptide reads, in one-letter code: Small integral membrane protein 46 (50 aa).

The chain crosses the membrane as a helical span at residues 15–37 (TTFQLWLQLLLWAHLAVRFLGYL).

Its subcellular location is the membrane. This chain is Small integral membrane protein 46, found in Homo sapiens (Human).